The following is a 1757-amino-acid chain: E3 ubiquitin-protein ligase UBR1 (1757 aa).

The tract at residues 1–24 is disordered; it reads MADEEMDGAERMDVSPEPPLAPQR. Ala2 bears the N-acetylalanine mark. A UBR-type zinc finger spans residues 97–168; that stretch reads QLCGKVFKSG…TGPFCVDHEP (72 aa). Positions 99, 112, 115, 124, 127, 133, and 136 each coordinate Zn(2+). An a peptide-binding site is contributed by Phe148. Cys149 provides a ligand contact to Zn(2+). An a peptide-binding site is contributed by Asp150. Zn(2+) is bound at residue Cys151. Asp153 provides a ligand contact to a peptide. Cys163 and His166 together coordinate Zn(2+). Residues 842-868 form a disordered region; the sequence is QHSKAEHMQKKRRKQENKDEALPPPPP. Residues 1022–1057 form a UBC2-binding region (U2BR) region; the sequence is RKRKAEAARLHRQKIMAQMSALQKNFIETHKLMYDN. Zn(2+) is bound by residues Cys1101, Cys1104, Cys1162, His1164, His1167, and Cys1170. An RING-type; atypical zinc finger spans residues 1101-1204; the sequence is CILCQEEQEV…SGEYLCPLCK (104 aa). Ser1182 carries the phosphoserine modification. 5 residues coordinate Zn(2+): Cys1200, Cys1203, Cys1635, Cys1638, and Cys1661.

Belongs to the E3 ubiquitin-protein ligase UBR1-like family. In terms of assembly, interacts with RECQL4. In terms of tissue distribution, present in skeletal muscle and liver (at protein level). Broadly expressed, with highest levels in skeletal muscle and heart. Expressed in acinar cells of the pancreas. In testes, expressed primarily in spermatogonia.

It is found in the cytoplasm. The protein localises to the cytosol. The catalysed reaction is S-ubiquitinyl-[E2 ubiquitin-conjugating enzyme]-L-cysteine + [acceptor protein]-L-lysine = [E2 ubiquitin-conjugating enzyme]-L-cysteine + N(6)-ubiquitinyl-[acceptor protein]-L-lysine.. It participates in protein modification; protein ubiquitination. Functionally, E3 ubiquitin-protein ligase which is a component of the N-end rule pathway. Recognizes and binds proteins bearing specific N-terminal residues (N-degrons) that are destabilizing according to the N-end rule, leading to their ubiquitination and subsequent degradation. Recognizes both type-1 and type-2 N-degrons, containing positively charged amino acids (Arg, Lys and His) and bulky and hydrophobic amino acids, respectively. Does not ubiquitinate proteins that are acetylated at the N-terminus. In contrast, it strongly binds methylated N-degrons. Binds leucine and is a negative regulator of the leucine-mTOR signaling pathway, thereby controlling cell growth. In Mus musculus (Mouse), this protein is E3 ubiquitin-protein ligase UBR1.